Consider the following 371-residue polypeptide: Chitin deacetylase (371 aa).

Positions 1 to 20 are cleaved as a signal peptide; that stretch reads MLCRLFTLFITAALACCVAA. Residues 73-112 form a disordered region; the sequence is PKPEPEPTAVPTMAPEPTTVPPTEPSGTYPPETTPTVEPT. Composition is skewed to low complexity over residues 79-89 and 102-112; these read PTAVPTMAPEP and PPETTPTVEPT. Cys164 and Cys358 are joined by a disulfide. N-linked (GlcNAc...) asparagine glycosylation occurs at Asn167. The region spanning 168-353 is the NodB homology domain; that stretch reads GTIALTFDDG…EIKKRGLRAV (186 aa). Asp175 (proton acceptor) is an active-site residue. Residue Asp175 coordinates acetate. Co(2+) is bound by residues Asp176, His228, and His232. N-linked (GlcNAc...) asparagine glycosylation is present at Asn239. Acetate is bound at residue Tyr270. The Proton donor role is filled by His327.

This sequence belongs to the polysaccharide deacetylase family. It depends on Co(2+) as a cofactor.

The enzyme catalyses [(1-&gt;4)-N-acetyl-beta-D-glucosaminyl](n) + n H2O = chitosan + n acetate. Functionally, hydrolyzes the N-acetamido groups of N-acetyl-D-glucosamine residues in chitin to form chitosan and acetate. In Arthroderma benhamiae (strain ATCC MYA-4681 / CBS 112371) (Trichophyton mentagrophytes), this protein is Chitin deacetylase.